The chain runs to 158 residues: Ribosome-binding factor A (158 aa).

Positions 127–158 are disordered; the sequence is RQGAVHAGDADPYKESAAEEPAAYEDDERRPD. Over residues 134-143 the composition is skewed to basic and acidic residues; that stretch reads GDADPYKESA.

The protein belongs to the RbfA family. As to quaternary structure, monomer. Binds 30S ribosomal subunits, but not 50S ribosomal subunits or 70S ribosomes.

Its subcellular location is the cytoplasm. Its function is as follows. One of several proteins that assist in the late maturation steps of the functional core of the 30S ribosomal subunit. Associates with free 30S ribosomal subunits (but not with 30S subunits that are part of 70S ribosomes or polysomes). Required for efficient processing of 16S rRNA. May interact with the 5'-terminal helix region of 16S rRNA. This chain is Ribosome-binding factor A, found in Mycobacteroides abscessus (strain ATCC 19977 / DSM 44196 / CCUG 20993 / CIP 104536 / JCM 13569 / NCTC 13031 / TMC 1543 / L948) (Mycobacterium abscessus).